A 192-amino-acid polypeptide reads, in one-letter code: Ribosomal RNA small subunit methyltransferase G (192 aa).

S-adenosyl-L-methionine contacts are provided by residues Gly63, Phe68, 112–113 (IE), and Arg125.

The protein belongs to the methyltransferase superfamily. RNA methyltransferase RsmG family.

The protein localises to the cytoplasm. The enzyme catalyses guanosine(527) in 16S rRNA + S-adenosyl-L-methionine = N(7)-methylguanosine(527) in 16S rRNA + S-adenosyl-L-homocysteine. Specifically methylates the N7 position of guanine in position 527 of 16S rRNA. The sequence is that of Ribosomal RNA small subunit methyltransferase G from Rickettsia bellii (strain OSU 85-389).